A 180-amino-acid chain; its full sequence is Pro-glucagon (180 aa).

Residues 1 to 20 (MKNIYIVAGFFVVLVQGSWQ) form the signal peptide. The segment at 25–59 (DTEEKSRSFPASQTDPLEDPDQINEDKRHSQGTFT) is disordered. S54 carries the phosphoserine modification. Residues 84–89 (NRNNIA) constitute a propeptide that is removed on maturation. A phosphoserine mark is found at S105 and S108. The residue at position 127 (R127) is an Arginine amide. The propeptide occupies 131 to 145 (DFPEEVTIVEELGRR). Phosphoserine is present on residues S150 and S152.

This sequence belongs to the glucagon family. Post-translationally, proglucagon is post-translationally processed in a tissue-specific manner in pancreatic A cells and intestinal L cells. In pancreatic A cells, the major bioactive hormone is glucagon cleaved by PCSK2/PC2. In the intestinal L cells PCSK1/PC1 liberates GLP-1, GLP-2, glicentin and oxyntomodulin. GLP-1 is further N-terminally truncated by post-translational processing in the intestinal L cells resulting in GLP-1(7-37) GLP-1-(7-36)amide. The C-terminal amidation is neither important for the metabolism of GLP-1 nor for its effects on the endocrine pancreas.

Its subcellular location is the secreted. Its function is as follows. Plays a key role in glucose metabolism and homeostasis. Regulates blood glucose by increasing gluconeogenesis and decreasing glycolysis. A counterregulatory hormone of insulin, raises plasma glucose levels in response to insulin-induced hypoglycemia. Plays an important role in initiating and maintaining hyperglycemic conditions in diabetes. Functionally, potent stimulator of glucose-dependent insulin release. Also stimulates insulin release in response to IL6. Plays important roles on gastric motility and the suppression of plasma glucagon levels. May be involved in the suppression of satiety and stimulation of glucose disposal in peripheral tissues, independent of the actions of insulin. Has growth-promoting activities on intestinal epithelium. May also regulate the hypothalamic pituitary axis (HPA) via effects on LH, TSH, CRH, oxytocin, and vasopressin secretion. Increases islet mass through stimulation of islet neogenesis and pancreatic beta cell proliferation. Inhibits beta cell apoptosis. Stimulates intestinal growth and up-regulates villus height in the small intestine, concomitant with increased crypt cell proliferation and decreased enterocyte apoptosis. The gastrointestinal tract, from the stomach to the colon is the principal target for GLP-2 action. Plays a key role in nutrient homeostasis, enhancing nutrient assimilation through enhanced gastrointestinal function, as well as increasing nutrient disposal. Stimulates intestinal glucose transport and decreases mucosal permeability. In terms of biological role, significantly reduces food intake. Inhibits gastric emptying in humans. Suppression of gastric emptying may lead to increased gastric distension, which may contribute to satiety by causing a sensation of fullness. Its function is as follows. May modulate gastric acid secretion and the gastro-pyloro-duodenal activity. May play an important role in intestinal mucosal growth in the early period of life. This chain is Pro-glucagon (GCG), found in Mesocricetus auratus (Golden hamster).